The chain runs to 308 residues: Porphobilinogen deaminase (308 aa).

Cysteine 241 bears the S-(dipyrrolylmethanemethyl)cysteine mark.

The protein belongs to the HMBS family. As to quaternary structure, monomer. It depends on dipyrromethane as a cofactor.

It carries out the reaction 4 porphobilinogen + H2O = hydroxymethylbilane + 4 NH4(+). The protein operates within porphyrin-containing compound metabolism; protoporphyrin-IX biosynthesis; coproporphyrinogen-III from 5-aminolevulinate: step 2/4. Its function is as follows. Tetrapolymerization of the monopyrrole PBG into the hydroxymethylbilane pre-uroporphyrinogen in several discrete steps. The protein is Porphobilinogen deaminase of Staphylococcus aureus (strain bovine RF122 / ET3-1).